A 235-amino-acid chain; its full sequence is Ribonuclease PH (235 aa).

Residues arginine 86 and 124–126 (GTR) each bind phosphate.

It belongs to the RNase PH family. Homohexameric ring arranged as a trimer of dimers.

It catalyses the reaction tRNA(n+1) + phosphate = tRNA(n) + a ribonucleoside 5'-diphosphate. In terms of biological role, phosphorolytic 3'-5' exoribonuclease that plays an important role in tRNA 3'-end maturation. Removes nucleotide residues following the 3'-CCA terminus of tRNAs; can also add nucleotides to the ends of RNA molecules by using nucleoside diphosphates as substrates, but this may not be physiologically important. Probably plays a role in initiation of 16S rRNA degradation (leading to ribosome degradation) during starvation. In Francisella philomiragia subsp. philomiragia (strain ATCC 25017 / CCUG 19701 / FSC 153 / O#319-036), this protein is Ribonuclease PH.